Reading from the N-terminus, the 306-residue chain is F-box/LRR-repeat protein At3g26922 (306 aa).

In terms of domain architecture, F-box spans 13–73 (EDRISDLPEA…QSEDETYSEI (61 aa)). LRR repeat units lie at residues 67–93 (DETYSEIVCRLLLSNKAPFLESLHLGF), 98–122 (CRSVEVGMWIGIAYARHVRDLVLHV), 138–170 (CETLESLTLRSWVLVDVPSPACLKSLRTLRLEN), 171–196 (VDYKYDDSVYNLLSGCPNLENLVVYR), 215–243 (LTIYDDNDGEYCTGYVINAPSLKYLKIDG), and 263–288 (IMNVSKIINEKLLETLTSVKRLSLAL).

This Arabidopsis thaliana (Mouse-ear cress) protein is F-box/LRR-repeat protein At3g26922.